Here is a 1420-residue protein sequence, read N- to C-terminus: DNA-directed RNA polymerase subunit beta' (1420 aa).

Cysteine 70, cysteine 72, cysteine 85, and cysteine 88 together coordinate Zn(2+). Positions 464, 466, and 468 each coordinate Mg(2+). 4 residues coordinate Zn(2+): cysteine 823, cysteine 897, cysteine 904, and cysteine 907.

The protein belongs to the RNA polymerase beta' chain family. In terms of assembly, the RNAP catalytic core consists of 2 alpha, 1 beta, 1 beta' and 1 omega subunit. When a sigma factor is associated with the core the holoenzyme is formed, which can initiate transcription. Mg(2+) serves as cofactor. It depends on Zn(2+) as a cofactor.

The catalysed reaction is RNA(n) + a ribonucleoside 5'-triphosphate = RNA(n+1) + diphosphate. DNA-dependent RNA polymerase catalyzes the transcription of DNA into RNA using the four ribonucleoside triphosphates as substrates. The sequence is that of DNA-directed RNA polymerase subunit beta' from Polynucleobacter necessarius subsp. necessarius (strain STIR1).